The sequence spans 831 residues: Thymine dioxygenase JBP1-B (831 aa).

Residues 80 to 282 (VVGGVLLPGA…RLTCVCYYRA (203 aa)) form a thymine dioxygenase region. Residues His207, Asp209, and His257 each coordinate Fe cation. Arg273 lines the 2-oxoglutarate pocket. The tract at residues 409 to 578 (LGGALKAAEE…IEEARRRGNA (170 aa)) is DNA-binding JBP1 domain.

The protein belongs to the TET family. JBP1 subfamily. In terms of assembly, monomer. Binds to DNA as a monomer. The cofactor is Fe(2+).

Its subcellular location is the nucleus. It catalyses the reaction thymine + 2-oxoglutarate + O2 = 5-hydroxymethyluracil + succinate + CO2. Dioxygenase that catalyzes the first step of DNA base J (beta-d-glucosyl-HOMedU) biosynthesis by converting thymine to 5-hydroxymethyluracil (HOMedU). DNA base J is a hypermodified thymidine residue found in the genome of kinetoplastid parasites, which is localized primarily to repetitive DNA, namely the telomeres, and is implicated in the regulation of antigenic variation. Also specifically binds to base J-containing DNA (J-DNA). Involved in propagation and maintenance of DNA base J synthesis initiated by JBP2 by specifically binding already synthesized DNA base J and propagating J synthesis. Thymine dioxygenase activity and J-DNA-binding are independent functions. The sequence is that of Thymine dioxygenase JBP1-B (JBP1B) from Trypanosoma cruzi (strain CL Brener).